Consider the following 552-residue polypeptide: uncharacterized protein (552 aa).

29–36 (GENAWGKS) is an ATP binding site. In terms of domain architecture, Toprim spans 379–469 (RCWLLVEGET…AEREHLTALP (91 aa)).

This is an uncharacterized protein from Escherichia coli (strain K12).